A 98-amino-acid chain; its full sequence is NADH-ubiquinone oxidoreductase chain 4L (98 aa).

3 consecutive transmembrane segments (helical) span residues M1–M21, H25–T45, and M59–V81.

This sequence belongs to the complex I subunit 4L family. As to quaternary structure, core subunit of respiratory chain NADH dehydrogenase (Complex I) which is composed of 45 different subunits.

It is found in the mitochondrion inner membrane. The catalysed reaction is a ubiquinone + NADH + 5 H(+)(in) = a ubiquinol + NAD(+) + 4 H(+)(out). Its function is as follows. Core subunit of the mitochondrial membrane respiratory chain NADH dehydrogenase (Complex I) which catalyzes electron transfer from NADH through the respiratory chain, using ubiquinone as an electron acceptor. Part of the enzyme membrane arm which is embedded in the lipid bilayer and involved in proton translocation. The chain is NADH-ubiquinone oxidoreductase chain 4L (MT-ND4L) from Equus caballus (Horse).